Reading from the N-terminus, the 673-residue chain is MKIHNIIKIIIVVCLEGFALTSFAGFGDSCASLPTTTDGYLESDTAYGYIIRSIDMKAPGGNCDANKPGITFCFKNKDGSSDPCTMYTLNQGDSKKISDLSKDNNPDLGANPILKNIVLTVQTWQNDICLLMPTSRGPMPVACKALSNPPAPPSVPSCSNIGQSCYTGANYSQSLINFSGLAVQCLKETLDKIFFVGNSCGSQSQSSEITNLTAFPTFQGYLKNAIGAALILYVMFFAFNMVLNKEYGNPDKIALFVIKLLFVTYFSIGLGPLNFNSSQPTQENGMLKYGLPLLTGIAPEFAQIIFNAAGSKGLCVFDTSKYQSGYQFYALWDSIDCRIGYYLGLDLLYNIDKNGVLSSFARGDGGNSSGSIPIPNLGNPDKNSPNALTSVGSLRFFTVMFGFFMAGNVIILISGLVFAVIFLSILLYFITHYLVCMITIYVMTYVSPIFIPMMLFNRTKGYFDGWLKVSLSCALQPAVVAGFIALLITMYDSAIFKNCEFLRYDYEKNNVKFSTFELRLPASSAEVCQESFGYKMLNYYAGKGWEEHLVILFPIKSIAKDVVSILAELLCVLVFSVIFYYFSKSISQFAADLTNGPKMDAVTASPTKIVDLVKQGAAFIKDAAQATQGKPPSSGDMPGDGGSKRSEGQKGDDSFISSGGNSSGDSLSSSGGK.

The first 24 residues, 1 to 24 (MKIHNIIKIIIVVCLEGFALTSFA), serve as a signal peptide directing secretion. 6 helical membrane-spanning segments follow: residues 224-244 (NAIG…MVLN), 253-273 (IALF…LGPL), 410-430 (IILI…LYFI), 436-456 (CMIT…MMLF), 469-489 (VSLS…LLIT), and 562-582 (VVSI…FYYF). Positions 624 to 673 (AQATQGKPPSSGDMPGDGGSKRSEGQKGDDSFISSGGNSSGDSLSSSGGK) are disordered. Positions 642–653 (GSKRSEGQKGDD) are enriched in basic and acidic residues. Low complexity predominate over residues 654 to 673 (SFISSGGNSSGDSLSSSGGK).

This sequence belongs to the TrbL/VirB6 family.

It is found in the cell membrane. This is an uncharacterized protein from Rickettsia bellii (strain RML369-C).